A 340-amino-acid chain; its full sequence is Protein RecA (340 aa).

ATP is bound at residue 66–73 (GPESSGKT).

Belongs to the RecA family.

The protein resides in the cytoplasm. In terms of biological role, can catalyze the hydrolysis of ATP in the presence of single-stranded DNA, the ATP-dependent uptake of single-stranded DNA by duplex DNA, and the ATP-dependent hybridization of homologous single-stranded DNAs. It interacts with LexA causing its activation and leading to its autocatalytic cleavage. This Rickettsia prowazekii (strain Madrid E) protein is Protein RecA.